An 82-amino-acid polypeptide reads, in one-letter code: Delta-actitoxin-Aeq2b 1 (82 aa).

A signal peptide spans 1-19; sequence MNRLMILVFAAVILALASA. Positions 20 to 26 are excised as a propeptide; it reads DEDVDIA. 3 cysteine pairs are disulfide-bonded: C32/C79, C34/C69, and C62/C80.

It belongs to the sea anemone sodium channel inhibitory toxin family. Type I subfamily.

The protein resides in the secreted. It is found in the nematocyst. Its function is as follows. Binds specifically to voltage-gated sodium channels (Nav), thereby delaying their inactivation during signal transduction. Causes death to crabs. The chain is Delta-actitoxin-Aeq2b 1 from Actinia equina (Beadlet anemone).